Reading from the N-terminus, the 328-residue chain is Cytochrome c biogenesis protein CcsA (328 aa).

8 helical membrane passes run 13 to 33 (ISFS…LVNL), 46 to 66 (GIVI…IYSG), 73 to 93 (LYES…VSYF), 101 to 121 (LNAI…SGLL), 146 to 166 (MILG…LLVI), 234 to 254 (IISL…VWAN), 263 to 283 (WDPK…YLHI), and 295 to 315 (AIVA…VNLL).

The protein belongs to the CcmF/CycK/Ccl1/NrfE/CcsA family. May interact with Ccs1.

It is found in the plastid. It localises to the chloroplast thylakoid membrane. In terms of biological role, required during biogenesis of c-type cytochromes (cytochrome c6 and cytochrome f) at the step of heme attachment. The protein is Cytochrome c biogenesis protein CcsA of Barbarea verna (Land cress).